The sequence spans 239 residues: Calcium load-activated calcium channel (239 aa).

At 1-55 (MPRKRKCDLRAVRVGLLLGGGGVYGSRFRFTFPGCRALSPWRVRVQRRRCEMSTM) the chain is on the lumenal side. A helical transmembrane segment spans residues 56–83 (FADTLLIVFISVCTALLAEGITWVLVYR). A coiled-coil region spans residues 83–140 (RTDKYKRLKAEVEKQSKKLEKKKETITESAGRQQKKKIERQEEKLKNNNRDLSMVRMK). Residues 84–137 (TDKYKRLKAEVEKQSKKLEKKKETITESAGRQQKKKIERQEEKLKNNNRDLSMV) lie on the Cytoplasmic side of the membrane. Ser111 carries the post-translational modification Phosphoserine. The chain crosses the membrane as a helical span at residues 138-157 (RMKSMFAIGFCFTALMGMFN). The Lumenal portion of the chain corresponds to 158-171 (SIFDGRVVAKLPFT). An intramembrane segment occupies 172–181 (PLSYIQGLSH). The Lumenal portion of the chain corresponds to 182-191 (RNLLGDDTTD). The helical transmembrane segment at 192-213 (CSFIFLYILCTMSIRQNIQKIL) threads the bilayer. Residues 214 to 239 (GLAPSRAATKQAGGFLGPPPPSGKFS) are Cytoplasmic-facing. Position 239 is a phosphoserine (Ser239).

The protein belongs to the TMCO1 family. Homodimer and homotetramer. Homodimer under resting conditions; forms homotetramers following ER calcium overload. Component of the GET- and EMC-like (GEL) complex, composed of RAB5IF/OPTI and TMCO1. The GEL complex is part of the multi-pass translocon (MPT) complex, composed of three subcomplexes, the GEL complex (composed of RAB5IF/OPTI and TMCO1), the BOS complex (composed of NCLN/Nicalin, NOMO and TMEM147) and the PAT complex (composed of WDR83OS/Asterix and CCDC47). The MPT complex associates with the SEC61 complex. In terms of tissue distribution, widely expressed in adult and fetal tissues, with higher levels in thymus, prostate, testis and small intestine and lower levels in brain, placenta, lung and kidney. Present in most tissues in the eye, including the trabecular meshwork and retina (at protein level).

It localises to the endoplasmic reticulum membrane. It is found in the golgi apparatus membrane. The protein localises to the mitochondrion membrane. The catalysed reaction is Ca(2+)(in) = Ca(2+)(out). In terms of biological role, endoplasmic reticulum (ER) calcium-selective channel preventing intracellular Ca2(+) stores from overfilling and maintaining calcium homeostasis in the ER. In response to endoplasmic reticulum (ER) Ca2(+) overloading, assembles into a homotetramer, forming a functional calcium-selective channel facilitating Ca2(+) release. Mediates ER Ca2(+) homeostasis in osteoblasts and plays a key role in bone formation, via the CaMKII-HDAC4-RUNX2 signaling axis. Component of the multi-pass translocon (MPT) complex that mediates insertion of multi-pass membrane proteins into the lipid bilayer of membranes. The MPT complex takes over after the SEC61 complex: following membrane insertion of the first few transmembrane segments of proteins by the SEC61 complex, the MPT complex occludes the lateral gate of the SEC61 complex to promote insertion of subsequent transmembrane regions. Within the MPT complex, the GEL subcomplex may mediate insertion of transmembrane regions into the membrane. This is Calcium load-activated calcium channel from Homo sapiens (Human).